The chain runs to 302 residues: Acetaldehyde dehydrogenase 1 (302 aa).

12 to 15 (SGNI) provides a ligand contact to NAD(+). C127 functions as the Acyl-thioester intermediate in the catalytic mechanism. Residues 158 to 166 (SAGPGTRAN) and N277 contribute to the NAD(+) site.

It belongs to the acetaldehyde dehydrogenase family.

It carries out the reaction acetaldehyde + NAD(+) + CoA = acetyl-CoA + NADH + H(+). The polypeptide is Acetaldehyde dehydrogenase 1 (Mycobacteroides abscessus (strain ATCC 19977 / DSM 44196 / CCUG 20993 / CIP 104536 / JCM 13569 / NCTC 13031 / TMC 1543 / L948) (Mycobacterium abscessus)).